A 206-amino-acid chain; its full sequence is Small ribosomal subunit protein uS4 (206 aa).

Residues 96–156 (SRLDNIVYRL…KKSKNQLRIK (61 aa)) enclose the S4 RNA-binding domain.

Belongs to the universal ribosomal protein uS4 family. In terms of assembly, part of the 30S ribosomal subunit. Contacts protein S5. The interaction surface between S4 and S5 is involved in control of translational fidelity.

Functionally, one of the primary rRNA binding proteins, it binds directly to 16S rRNA where it nucleates assembly of the body of the 30S subunit. With S5 and S12 plays an important role in translational accuracy. The protein is Small ribosomal subunit protein uS4 of Buchnera aphidicola subsp. Cinara cedri (strain Cc).